The chain runs to 252 residues: 3-dehydroquinate dehydratase (252 aa).

3-dehydroquinate is bound by residues Ser21, 46–48 (EWR), and Arg82. His143 functions as the Proton donor/acceptor in the catalytic mechanism. The active-site Schiff-base intermediate with substrate is Lys170. Residues Arg213, Ser232, and Gln236 each coordinate 3-dehydroquinate.

This sequence belongs to the type-I 3-dehydroquinase family. In terms of assembly, homodimer.

It catalyses the reaction 3-dehydroquinate = 3-dehydroshikimate + H2O. It participates in metabolic intermediate biosynthesis; chorismate biosynthesis; chorismate from D-erythrose 4-phosphate and phosphoenolpyruvate: step 3/7. Involved in the third step of the chorismate pathway, which leads to the biosynthesis of aromatic amino acids. Catalyzes the cis-dehydration of 3-dehydroquinate (DHQ) and introduces the first double bond of the aromatic ring to yield 3-dehydroshikimate. The polypeptide is 3-dehydroquinate dehydratase (Salmonella agona (strain SL483)).